The following is an 80-amino-acid chain: Kappa-actitoxin-Avd4i (80 aa).

The signal sequence occupies residues 1-19; it reads MNKALFLCLVVLCAAVVFA. Positions 20–31 are excised as a propeptide; it reads AEDLQKAKHAPF. 3 disulfide bridges follow: cysteine 41–cysteine 76, cysteine 43–cysteine 69, and cysteine 59–cysteine 77.

This sequence belongs to the sea anemone type 3 (BDS) potassium channel toxin family. Weakly expressed in the ectodermal tissue from the distal and proximal tentacles, body wall, and oral disk.

The protein localises to the secreted. Its subcellular location is the nematocyst. Blocks Kv3 voltage-gated potassium channels. Reduces blood pressure. This is Kappa-actitoxin-Avd4i from Anemonia viridis (Snakelocks anemone).